We begin with the raw amino-acid sequence, 280 residues long: Vitamin B12-binding protein (280 aa).

Residues 1–27 form the signal peptide; the sequence is MMPLGLFPLPRAAVVLLISLLTLPAQA. The Fe/B12 periplasmic-binding domain occupies 30–277; that stretch reads RVISLSPSTT…QMASIPTPVA (248 aa). A cyanocob(III)alamin-binding site is contributed by Tyr-57. Residues Cys-190 and Cys-266 are joined by a disulfide bond.

Belongs to the BtuF family. As to quaternary structure, the complex is composed of two ATP-binding proteins (BtuD), two transmembrane proteins (BtuC) and a solute-binding protein (BtuF).

It is found in the periplasm. Its function is as follows. Part of the ABC transporter complex BtuCDF involved in vitamin B12 import. Binds vitamin B12 and delivers it to the periplasmic surface of BtuC. The polypeptide is Vitamin B12-binding protein (Yersinia pseudotuberculosis serotype O:1b (strain IP 31758)).